The primary structure comprises 230 residues: MSQVHALSDDQVGQELRKMTAFIKQEAEEKAREIQIKADEEFAIEKSKLVRQETDAIDSAYAKKFKQAQMSQQITRSTMANKTRLRVLGARQELLDEIFEAASAQLGQATHDLGRYKDILRDLILEGFYAMNEPELVIRARQADYDAVREAAGWASAQYKHKTDKDVKATIDAENPVPEGSAGGIIIVGGNGKIDIDNTFEARLTLLKDSALPAMRKALFGENPNRKFFD.

The protein belongs to the V-ATPase E subunit family. In terms of assembly, V-ATPase is a heteromultimeric enzyme composed of a peripheral catalytic V1 complex (components A to H) attached to an integral membrane V0 proton pore complex (components: a, c, c', c'', d, e, f and VOA1).

The protein localises to the vacuole membrane. Its function is as follows. Subunit of the V1 complex of vacuolar(H+)-ATPase (V-ATPase), a multisubunit enzyme composed of a peripheral complex (V1) that hydrolyzes ATP and a membrane integral complex (V0) that translocates protons. V-ATPase is responsible for acidifying and maintaining the pH of intracellular compartments. This is V-type proton ATPase subunit E from Neurospora crassa (strain ATCC 24698 / 74-OR23-1A / CBS 708.71 / DSM 1257 / FGSC 987).